Here is a 415-residue protein sequence, read N- to C-terminus: Cyclin-A2 (415 aa).

The protein belongs to the cyclin family. Cyclin AB subfamily. In terms of assembly, interacts with the CDK1 and CDK2 protein kinases to form serine/threonine kinase holoenzyme complexes. As to expression, ubiquitous.

Its subcellular location is the nucleus. The protein localises to the cytoplasm. Its function is as follows. Cyclin which controls both the G1/S and the G2/M transition phases of the cell cycle. Functions through the formation of specific serine/threonine kinase holoenzyme complexes with the cyclin-dependent protein kinases CDK1 and CDK2. The cyclin subunit confers the substrate specificity of these complexes and differentially interacts with and activates CDK1 and CDK2 throughout the cell cycle. In Xenopus laevis (African clawed frog), this protein is Cyclin-A2 (ccna2).